Here is a 118-residue protein sequence, read N- to C-terminus: Large ribosomal subunit protein bL20 (118 aa).

The protein belongs to the bacterial ribosomal protein bL20 family.

Functionally, binds directly to 23S ribosomal RNA and is necessary for the in vitro assembly process of the 50S ribosomal subunit. It is not involved in the protein synthesizing functions of that subunit. The protein is Large ribosomal subunit protein bL20 of Ralstonia nicotianae (strain ATCC BAA-1114 / GMI1000) (Ralstonia solanacearum).